The sequence spans 512 residues: Cytochrome P450 1A1 (512 aa).

The segment at 29–40 is mitochondrial targeting signal; sequence SRPRVPKGLKNP. Serine 67 is a glycosylation site (O-linked (GlcNAc) serine). Phenylalanine 224 provides a ligand contact to substrate. Cysteine 457 is a heme binding site.

Belongs to the cytochrome P450 family. Interacts with cytosolic chaperones HSP70 and HSP90; this interaction is required for initial targeting to mitochondria. Interacts (via mitochondrial targeting signal) with TOMM40 (via N-terminus); this interaction is required for translocation across the mitochondrial outer membrane. The cofactor is heme.

Its subcellular location is the endoplasmic reticulum membrane. It localises to the mitochondrion inner membrane. The protein localises to the microsome membrane. It is found in the cytoplasm. The catalysed reaction is an organic molecule + reduced [NADPH--hemoprotein reductase] + O2 = an alcohol + oxidized [NADPH--hemoprotein reductase] + H2O + H(+). It carries out the reaction estrone + reduced [NADPH--hemoprotein reductase] + O2 = 2-hydroxyestrone + oxidized [NADPH--hemoprotein reductase] + H2O + H(+). It catalyses the reaction estrone + reduced [NADPH--hemoprotein reductase] + O2 = 4-hydroxyestrone + oxidized [NADPH--hemoprotein reductase] + H2O + H(+). The enzyme catalyses estrone + reduced [NADPH--hemoprotein reductase] + O2 = 6alpha-hydroxyestrone + oxidized [NADPH--hemoprotein reductase] + H2O + H(+). The catalysed reaction is estrone + reduced [NADPH--hemoprotein reductase] + O2 = 15alpha-hydroxyestrone + oxidized [NADPH--hemoprotein reductase] + H2O + H(+). It carries out the reaction estrone + reduced [NADPH--hemoprotein reductase] + O2 = 16alpha-hydroxyestrone + oxidized [NADPH--hemoprotein reductase] + H2O + H(+). It catalyses the reaction 17beta-estradiol + reduced [NADPH--hemoprotein reductase] + O2 = 2-hydroxy-17beta-estradiol + oxidized [NADPH--hemoprotein reductase] + H2O + H(+). The enzyme catalyses 17beta-estradiol + reduced [NADPH--hemoprotein reductase] + O2 = 4-hydroxy-17beta-estradiol + oxidized [NADPH--hemoprotein reductase] + H2O + H(+). The catalysed reaction is 17beta-estradiol + reduced [NADPH--hemoprotein reductase] + O2 = 6alpha-hydroxy-17beta-estradiol + oxidized [NADPH--hemoprotein reductase] + H2O + H(+). It carries out the reaction 17beta-estradiol + reduced [NADPH--hemoprotein reductase] + O2 = 7alpha-hydroxy-17beta-estradiol + oxidized [NADPH--hemoprotein reductase] + H2O + H(+). It catalyses the reaction 17beta-estradiol + reduced [NADPH--hemoprotein reductase] + O2 = 15alpha-hydroxy-17beta-estradiol + oxidized [NADPH--hemoprotein reductase] + H2O + H(+). The enzyme catalyses (5Z,8Z,11Z)-eicosatrienoate + reduced [NADPH--hemoprotein reductase] + O2 = 19-hydroxy-(5Z,8Z,11Z)-eicosatrienoate + oxidized [NADPH--hemoprotein reductase] + H2O + H(+). The catalysed reaction is (5Z,8Z,11Z,14Z)-eicosatetraenoate + reduced [NADPH--hemoprotein reductase] + O2 = 16-hydroxy-(5Z,8Z,11Z,14Z)-eicosatetraenoate + oxidized [NADPH--hemoprotein reductase] + H2O + H(+). It carries out the reaction (5Z,8Z,11Z,14Z)-eicosatetraenoate + reduced [NADPH--hemoprotein reductase] + O2 = 17-hydroxy-(5Z,8Z,11Z,14Z)-eicosatetraenoate + oxidized [NADPH--hemoprotein reductase] + H2O + H(+). It catalyses the reaction (5Z,8Z,11Z,14Z)-eicosatetraenoate + reduced [NADPH--hemoprotein reductase] + O2 = 18-hydroxy-(5Z,8Z,11Z,14Z)-eicosatetraenoate + oxidized [NADPH--hemoprotein reductase] + H2O + H(+). The enzyme catalyses (5Z,8Z,11Z,14Z)-eicosatetraenoate + reduced [NADPH--hemoprotein reductase] + O2 = 19-hydroxy-(5Z,8Z,11Z,14Z)-eicosatetraenoate + oxidized [NADPH--hemoprotein reductase] + H2O + H(+). The catalysed reaction is (5Z,8Z,11Z,14Z,17Z)-eicosapentaenoate + reduced [NADPH--hemoprotein reductase] + O2 = 19-hydroxy-(5Z,8Z,11Z,14Z,17Z)-eicosapentaenoate + oxidized [NADPH--hemoprotein reductase] + H2O + H(+). It carries out the reaction (5Z,8Z,11Z,14Z)-eicosatetraenoate + reduced [NADPH--hemoprotein reductase] + O2 = (8R,9S)-epoxy-(5Z,11Z,14Z)-eicosatrienoate + oxidized [NADPH--hemoprotein reductase] + H2O + H(+). It catalyses the reaction (5Z,8Z,11Z,14Z)-eicosatetraenoate + reduced [NADPH--hemoprotein reductase] + O2 = (11R,12S)-epoxy-(5Z,8Z,14Z)-eicosatrienoate + oxidized [NADPH--hemoprotein reductase] + H2O + H(+). The enzyme catalyses (5Z,8Z,11Z,14Z)-eicosatetraenoate + reduced [NADPH--hemoprotein reductase] + O2 = (14S,15R)-epoxy-(5Z,8Z,11Z)-eicosatrienoate + oxidized [NADPH--hemoprotein reductase] + H2O + H(+). The catalysed reaction is (5Z,8Z,11Z,14Z)-eicosatetraenoate + reduced [NADPH--hemoprotein reductase] + O2 = (14R,15S)-epoxy-(5Z,8Z,11Z)-eicosatrienoate + oxidized [NADPH--hemoprotein reductase] + H2O + H(+). It carries out the reaction (5Z,8Z,11Z,14Z,17Z)-eicosapentaenoate + reduced [NADPH--hemoprotein reductase] + O2 = (17R,18S)-epoxy-(5Z,8Z,11Z,14Z)-eicosatetraenoate + oxidized [NADPH--hemoprotein reductase] + H2O + H(+). It catalyses the reaction (4Z,7Z,10Z,13Z,16Z,19Z)-docosahexaenoate + reduced [NADPH--hemoprotein reductase] + O2 = (19S,20R)-epoxy-(4Z,7Z,10Z,13Z,16Z)-docosapentaenoate + oxidized [NADPH--hemoprotein reductase] + H2O + H(+). The enzyme catalyses (4Z,7Z,10Z,13Z,16Z,19Z)-docosahexaenoate + reduced [NADPH--hemoprotein reductase] + O2 = (19R,20S)-epoxy-(4Z,7Z,10Z,13Z,16Z)-docosapentaenoate + oxidized [NADPH--hemoprotein reductase] + H2O + H(+). The catalysed reaction is all-trans-retinol + reduced [NADPH--hemoprotein reductase] + O2 = all-trans-retinal + oxidized [NADPH--hemoprotein reductase] + 2 H2O + H(+). It carries out the reaction all-trans-retinal + reduced [NADPH--hemoprotein reductase] + O2 = all-trans-retinoate + oxidized [NADPH--hemoprotein reductase] + H2O + 2 H(+). It catalyses the reaction (13S)-hydroperoxy-(9Z,11E)-octadecadienoate = 13-oxo-(9Z,11E)-octadecadienoate + H2O. The enzyme catalyses (12S)-hydroperoxy-(5Z,8Z,10E,14Z)-eicosatetraenoate = 12-oxo-(5Z,8Z,10E,14Z)-eicosatetraenoate + H2O. The catalysed reaction is (15S)-hydroperoxy-(5Z,8Z,11Z,13E)-eicosatetraenoate = 15-oxo-(5Z,8Z,11Z,13E)-eicosatetraenoate + H2O. It carries out the reaction (5S)-hydroperoxy-(6E,8Z,11Z,14Z)-eicosatetraenoate = 5-oxo-(6E,8Z,11Z,14Z)-eicosatetraenoate + H2O. The protein operates within steroid hormone biosynthesis. It participates in lipid metabolism; fatty acid metabolism. Its pathway is cofactor metabolism; retinol metabolism. In terms of biological role, a cytochrome P450 monooxygenase involved in the metabolism of various endogenous substrates, including fatty acids, steroid hormones and vitamins. Mechanistically, uses molecular oxygen inserting one oxygen atom into a substrate, and reducing the second into a water molecule, with two electrons provided by NADPH via cytochrome P450 reductase (CPR; NADPH-ferrihemoprotein reductase). Catalyzes the hydroxylation of carbon-hydrogen bonds. Exhibits high catalytic activity for the formation of hydroxyestrogens from estrone (E1) and 17beta-estradiol (E2), namely 2-hydroxy E1 and E2, as well as D-ring hydroxylated E1 and E2 at the C15alpha and C16alpha positions. Displays different regioselectivities for polyunsaturated fatty acids (PUFA) hydroxylation. Catalyzes the epoxidation of double bonds of certain PUFA. Converts arachidonic acid toward epoxyeicosatrienoic acid (EET) regioisomers, 8,9-, 11,12-, and 14,15-EET, that function as lipid mediators in the vascular system. Displays an absolute stereoselectivity in the epoxidation of eicosapentaenoic acid (EPA) producing the 17(R),18(S) enantiomer. May play an important role in all-trans retinoic acid biosynthesis in extrahepatic tissues. Catalyzes two successive oxidative transformation of all-trans retinol to all-trans retinal and then to the active form all-trans retinoic acid. May also participate in eicosanoids metabolism by converting hydroperoxide species into oxo metabolites (lipoxygenase-like reaction, NADPH-independent). The polypeptide is Cytochrome P450 1A1 (CYP1A1) (Macaca mulatta (Rhesus macaque)).